Reading from the N-terminus, the 68-residue chain is DNA-directed RNA polymerase subunit omega (68 aa).

This sequence belongs to the RNA polymerase subunit omega family. In terms of assembly, the RNAP catalytic core consists of 2 alpha, 1 beta, 1 beta' and 1 omega subunit. When a sigma factor is associated with the core the holoenzyme is formed, which can initiate transcription.

The enzyme catalyses RNA(n) + a ribonucleoside 5'-triphosphate = RNA(n+1) + diphosphate. Promotes RNA polymerase assembly. Latches the N- and C-terminal regions of the beta' subunit thereby facilitating its interaction with the beta and alpha subunits. The chain is DNA-directed RNA polymerase subunit omega from Trichlorobacter lovleyi (strain ATCC BAA-1151 / DSM 17278 / SZ) (Geobacter lovleyi).